Here is a 304-residue protein sequence, read N- to C-terminus: UDP-N-acetylenolpyruvoylglucosamine reductase (304 aa).

Residues 33 to 198 (KVGGPVDILL…LEVTFNLEKG (166 aa)) enclose the FAD-binding PCMH-type domain. The active site involves Arg-177. Ser-227 acts as the Proton donor in catalysis. Glu-297 is an active-site residue.

This sequence belongs to the MurB family. The cofactor is FAD.

It localises to the cytoplasm. The enzyme catalyses UDP-N-acetyl-alpha-D-muramate + NADP(+) = UDP-N-acetyl-3-O-(1-carboxyvinyl)-alpha-D-glucosamine + NADPH + H(+). Its pathway is cell wall biogenesis; peptidoglycan biosynthesis. Cell wall formation. The protein is UDP-N-acetylenolpyruvoylglucosamine reductase of Clostridium kluyveri (strain NBRC 12016).